Here is a 402-residue protein sequence, read N- to C-terminus: MTYQQPDAKGFYGKFGGQFVPETLMTAVIELDKAYREAKEDSSFQAELDDLLKNYVGRETPLYHAKRLTDHIGGAQIYLKREDLNHTGAHKINNALGQVLLAKRMGKKKIIAETGAGQHGVATATAAALFDMDCTIYMGEEDVKRQALNVFRMELLGAKVFSVTDGSRVLKDAVNAALRAWVAGIDDTHYIMGSALGPAPFPEIVRDFQSVIGREVKRQYAEISGGKLPDAVMACIGGGSNAIGMFYPFVNDKSVAMYGAEASGLGLDTEKHAATFAKGRPGILHGALMDVLQDAHGQIMEAFSISAGLDYPGVGPEHCYFNEIGRATYDSITDEEALEGFKLLSRLEGIIPALESSHAIALAQKVAAKMSPDQSLIVCLSGRGDKDVMQVKERFEAEAEGK.

Lys91 bears the N6-(pyridoxal phosphate)lysine mark.

This sequence belongs to the TrpB family. In terms of assembly, tetramer of two alpha and two beta chains. It depends on pyridoxal 5'-phosphate as a cofactor.

It carries out the reaction (1S,2R)-1-C-(indol-3-yl)glycerol 3-phosphate + L-serine = D-glyceraldehyde 3-phosphate + L-tryptophan + H2O. The protein operates within amino-acid biosynthesis; L-tryptophan biosynthesis; L-tryptophan from chorismate: step 5/5. The beta subunit is responsible for the synthesis of L-tryptophan from indole and L-serine. The polypeptide is Tryptophan synthase beta chain (Streptococcus thermophilus (strain ATCC BAA-491 / LMD-9)).